A 141-amino-acid polypeptide reads, in one-letter code: Putative pre-16S rRNA nuclease (141 aa).

The protein belongs to the YqgF nuclease family.

It localises to the cytoplasm. Its function is as follows. Could be a nuclease involved in processing of the 5'-end of pre-16S rRNA. In Pseudomonas putida (strain ATCC 47054 / DSM 6125 / CFBP 8728 / NCIMB 11950 / KT2440), this protein is Putative pre-16S rRNA nuclease.